The primary structure comprises 326 residues: G-protein coupled receptor 1 (326 aa).

The residue at position 2 (Ser2) is an N-acetylserine. The Extracellular portion of the chain corresponds to 2-23; that stretch reads SAVLTAGGGLTAGDRSIITAIN. Residues 24–44 form a helical membrane-spanning segment; sequence TGASSLSFVGSAFIVLCYCLF. Residues 45–51 lie on the Cytoplasmic side of the membrane; the sequence is KELRKFS. A helical membrane pass occupies residues 52–72; sequence FKLVFYLALSDMLCSFFLIVG. Topologically, residues 73 to 84 are extracellular; the sequence is DPSKGFICYAQG. An intrachain disulfide couples Cys80 to Cys151. Residues 85–105 traverse the membrane as a helical segment; sequence YTTHFFCVASFLWTTTIAFTL. Residues 106-120 are Cytoplasmic-facing; sequence HRTVVKHKTDVEDLE. The chain crosses the membrane as a helical span at residues 121 to 141; sequence AMFHLYVWGTSLVVTVIRSFG. Residues 142–160 lie on the Extracellular side of the membrane; that stretch reads NNHSHLGPWCWTQTGLKGK. N-linked (GlcNAc...) asparagine glycosylation is present at Asn143. A helical membrane pass occupies residues 161 to 181; that stretch reads AVHFLTFYAPLWGAILYNGFT. Topologically, residues 182 to 213 are cytoplasmic; that stretch reads YFQVIRMLRNARRMAVGMSDRVDQFDNRAELK. Residues 214-234 traverse the membrane as a helical segment; that stretch reads VLNRWGYYPLILIGSWAFGTI. The Extracellular segment spans residues 235 to 246; the sequence is NRIHDFIEPGHK. A helical transmembrane segment spans residues 247-267; sequence IFWLSVLDVGTAALMGLFNSI. Residues 268-326 are Cytoplasmic-facing; sequence AYGFNSSVRRAIHERLELFLPERLYRWLPSNFRPKNHLILHQQQQQRSEMVSLKTEDQQ.

This sequence belongs to the G-protein coupled receptor 2 family. Interacts with GPA1. In terms of tissue distribution, mostly present in the meristematic regions. Expressed at low levels in seedlings, vascular tissues of cotyledons, hypocotyl, and roots, stems, leaves, flowering buds and siliques. In dark-grown seedlings, localized in the cotyledons and the hook.

The protein localises to the cell membrane. Together with GPA1, may regulate the cell cycle via a signaling cascade that uses phosphatidylinositol-specific phospholipase C (PI-PLC) as an effector and inositol 1,4,5-trisphosphate(IP(3)) as a second messenger. Promotes PI-PLC activity and IP(3) accumulation. Involved in the blue light (BL) signaling. Together with GPA1 and ADT3, required for BL-mediated synthesis of phenylpyruvate and subsequently of phenylalanine (Phe), in etiolated seedlings. Probably involved in cytokinin signal transduction. Plays a positive role in gibberellin- (GA) and brassinosteroid- (BR) regulated seed germination, probably independently of a heterotrimeric G-protein. Mediates seed dormancy abolition, and promotes seed germination and flowering. This is G-protein coupled receptor 1 (GCR1) from Arabidopsis thaliana (Mouse-ear cress).